The following is a 727-amino-acid chain: NADH-ubiquinone oxidoreductase 75 kDa subunit, mitochondrial (727 aa).

The N-terminal 23 residues, 1–23 (MLRIPVRKALVGLSKSPKGCVRT), are a transit peptide targeting the mitochondrion. The 79-residue stretch at 30–108 (NLIEVFVDGQ…GWNILTNSEK (79 aa)) folds into the 2Fe-2S ferredoxin-type domain. 3 residues coordinate [2Fe-2S] cluster: Cys-64, Cys-75, and Cys-78. Position 84 is an N6-acetyllysine (Lys-84). [2Fe-2S] cluster is bound at residue Cys-92. The 4Fe-4S His(Cys)3-ligated-type domain occupies 108–147 (KSKKAREGVMEFLLANHPLDCPICDQGGECDLQDQSMMFG). Residues His-124, Cys-128, Cys-131, Cys-137, Cys-176, Cys-179, Cys-182, and Cys-226 each coordinate [4Fe-4S] cluster. The 4Fe-4S Mo/W bis-MGD-type domain occupies 245–301 (TRKTESIDVMDAVGSNIVVSTRTGEVMRILPRMHEDINEEWISDKTRFAYDGLKRQR). Residues Lys-467, Lys-499, and Lys-709 each carry the N6-acetyllysine modification.

It belongs to the complex I 75 kDa subunit family. In terms of assembly, core subunit of respiratory chain NADH dehydrogenase (Complex I) which is composed of 45 different subunits. This is the largest subunit of complex I and it is a component of the iron-sulfur (IP) fragment of the enzyme. Complex I associates with ubiquinol-cytochrome reductase complex (Complex III) to form supercomplexes. Interacts with MDM2 and AKAP1. The cofactor is [2Fe-2S] cluster. [4Fe-4S] cluster is required as a cofactor.

The protein resides in the mitochondrion inner membrane. The catalysed reaction is a ubiquinone + NADH + 5 H(+)(in) = a ubiquinol + NAD(+) + 4 H(+)(out). Its function is as follows. Core subunit of the mitochondrial membrane respiratory chain NADH dehydrogenase (Complex I) which catalyzes electron transfer from NADH through the respiratory chain, using ubiquinone as an electron acceptor. Essential for catalysing the entry and efficient transfer of electrons within complex I. Plays a key role in the assembly and stability of complex I and participates in the association of complex I with ubiquinol-cytochrome reductase complex (Complex III) to form supercomplexes. The protein is NADH-ubiquinone oxidoreductase 75 kDa subunit, mitochondrial (NDUFS1) of Macaca fascicularis (Crab-eating macaque).